The primary structure comprises 452 residues: MTGRSCLTIVLAAGEGTRMRSSLPKVLHPVAGQTLLAHVLTAAPSGPGTSLAAVVGPGHEAVADEARHVRPDVMTFVQHERLGTAHAVLAAREAIARGADDLVIAFGDTPLISADTLARMRAPLQAGASLVVLGFHAADPTGYGRLIVDNGRLTAIREQADASADERSITLCNAGVMAFDGKTALQIIEKIGNANSKGEYYLTDAVSIVRESGLTAAVIETSEDEVRGINTKAQLAEAEQVMQARLRKEALDAGVTMVAPDTVFLAADTSFGKDVTIEPYVVIGPGVTIADGAVIHSFSHLVQASIGRNASVGPYARLRPGTSLGEGARVGNFVETKAAVLEAGAKVNHLTYVGDAHIGANANIGAGTITCNYDGFGKYRTEIGEGAFVGSNSSLVAPVKIGAGAYVGSGSVVTRNVPDDALAVGRGQQTVREGWARRFREMKLLAKKPKTG.

The interval 1 to 232 is pyrophosphorylase; the sequence is MTGRSCLTIV…EDEVRGINTK (232 aa). Residues 11–14, K25, Q78, and 83–84 each bind UDP-N-acetyl-alpha-D-glucosamine; these read LAAG and GT. A Mg(2+)-binding site is contributed by D108. UDP-N-acetyl-alpha-D-glucosamine contacts are provided by G144, E158, N173, and N230. N230 lines the Mg(2+) pocket. Residues 233–253 form a linker region; it reads AQLAEAEQVMQARLRKEALDA. Residues 254–452 form an N-acetyltransferase region; the sequence is GVTMVAPDTV…KLLAKKPKTG (199 aa). UDP-N-acetyl-alpha-D-glucosamine is bound by residues R319 and K337. H349 functions as the Proton acceptor in the catalytic mechanism. Positions 352 and 363 each coordinate UDP-N-acetyl-alpha-D-glucosamine. Residues A366, 372–373, S391, S409, and R426 contribute to the acetyl-CoA site; that span reads NY.

It in the N-terminal section; belongs to the N-acetylglucosamine-1-phosphate uridyltransferase family. This sequence in the C-terminal section; belongs to the transferase hexapeptide repeat family. As to quaternary structure, homotrimer. The cofactor is Mg(2+).

It localises to the cytoplasm. The enzyme catalyses alpha-D-glucosamine 1-phosphate + acetyl-CoA = N-acetyl-alpha-D-glucosamine 1-phosphate + CoA + H(+). The catalysed reaction is N-acetyl-alpha-D-glucosamine 1-phosphate + UTP + H(+) = UDP-N-acetyl-alpha-D-glucosamine + diphosphate. It participates in nucleotide-sugar biosynthesis; UDP-N-acetyl-alpha-D-glucosamine biosynthesis; N-acetyl-alpha-D-glucosamine 1-phosphate from alpha-D-glucosamine 6-phosphate (route II): step 2/2. The protein operates within nucleotide-sugar biosynthesis; UDP-N-acetyl-alpha-D-glucosamine biosynthesis; UDP-N-acetyl-alpha-D-glucosamine from N-acetyl-alpha-D-glucosamine 1-phosphate: step 1/1. It functions in the pathway bacterial outer membrane biogenesis; LPS lipid A biosynthesis. Functionally, catalyzes the last two sequential reactions in the de novo biosynthetic pathway for UDP-N-acetylglucosamine (UDP-GlcNAc). The C-terminal domain catalyzes the transfer of acetyl group from acetyl coenzyme A to glucosamine-1-phosphate (GlcN-1-P) to produce N-acetylglucosamine-1-phosphate (GlcNAc-1-P), which is converted into UDP-GlcNAc by the transfer of uridine 5-monophosphate (from uridine 5-triphosphate), a reaction catalyzed by the N-terminal domain. This is Bifunctional protein GlmU from Nitrobacter hamburgensis (strain DSM 10229 / NCIMB 13809 / X14).